Reading from the N-terminus, the 525-residue chain is Probable feruloyl esterase B-1 (525 aa).

The signal sequence occupies residues 1-20 (MMRWFLLIGLASAAATDSSA). 6 cysteine pairs are disulfide-bonded: cysteine 26–cysteine 75, cysteine 61–cysteine 114, cysteine 187–cysteine 442, cysteine 256–cysteine 273, cysteine 282–cysteine 292, and cysteine 502–cysteine 524. 3 N-linked (GlcNAc...) asparagine glycosylation sites follow: asparagine 51, asparagine 80, and asparagine 98. Serine 188 functions as the Acyl-ester intermediate in the catalytic mechanism. Ca(2+)-binding residues include aspartate 257, aspartate 260, alanine 262, and aspartate 264. N-linked (GlcNAc...) asparagine glycosylation is found at asparagine 283, asparagine 288, and asparagine 351. Catalysis depends on charge relay system residues aspartate 401 and histidine 441.

The protein belongs to the tannase family.

Its subcellular location is the secreted. It carries out the reaction feruloyl-polysaccharide + H2O = ferulate + polysaccharide.. In terms of biological role, involved in degradation of plant cell walls. Hydrolyzes the feruloyl-arabinose ester bond in arabinoxylans as well as the feruloyl-galactose and feruloyl-arabinose ester bonds in pectin. This is Probable feruloyl esterase B-1 (faeB-1) from Neosartorya fischeri (strain ATCC 1020 / DSM 3700 / CBS 544.65 / FGSC A1164 / JCM 1740 / NRRL 181 / WB 181) (Aspergillus fischerianus).